We begin with the raw amino-acid sequence, 377 residues long: MIKTLVSPYSGFGSQKLKFDRSSEKVKTRAVRMELTITQPDDWHLHLRDGDLLHAVVPHSASNFKRAIVMPNLKPPVTSTAAAIIYRKFIMKALPSESSFDPLMTLYLTDKTLPEEIRLARESGVVYAVKLYPAGATTNSQDGVTDLFGKCLPVLEEMVKQNMPLLVHGEVTDPSIDVFDREKIFIETVLQPLIQRLPQLKVVMEHITTMDAVNFVESCKEGSVGATVTPQHLLLNRNALFQGGLQPHNYCLPVLKREIHREAIVKAVTSGSKKFFLGTDSAPHERSRKESSCGCAGIYSAPIALSLYAKVFDEAGALDKLEAFTSFNGPDFYGLPRNSSKITLKKSPWKVPDVFNFPFGEIVPMFAGETLQWQPLK.

Residues histidine 44, histidine 46, lysine 130, histidine 168, and histidine 206 each contribute to the Zn(2+) site. Lysine 130 carries the post-translational modification N6-carboxylysine. Serine 223 bears the Phosphoserine mark. Aspartate 280 is a binding site for Zn(2+).

This sequence belongs to the metallo-dependent hydrolases superfamily. DHOase family. Class II DHOase subfamily. Requires Zn(2+) as cofactor.

Its subcellular location is the mitochondrion. The enzyme catalyses (S)-dihydroorotate + H2O = N-carbamoyl-L-aspartate + H(+). It participates in pyrimidine metabolism; UMP biosynthesis via de novo pathway; (S)-dihydroorotate from bicarbonate: step 3/3. In Arabidopsis thaliana (Mouse-ear cress), this protein is Dihydroorotase, mitochondrial (PYR4).